Consider the following 359-residue polypeptide: Uroporphyrinogen decarboxylase (359 aa).

Residues 36-40 (RQAGR), Asp-85, Tyr-160, Ser-215, and His-338 each bind substrate.

It belongs to the uroporphyrinogen decarboxylase family. In terms of assembly, homodimer.

The protein localises to the cytoplasm. It carries out the reaction uroporphyrinogen III + 4 H(+) = coproporphyrinogen III + 4 CO2. It participates in porphyrin-containing compound metabolism; protoporphyrin-IX biosynthesis; coproporphyrinogen-III from 5-aminolevulinate: step 4/4. In terms of biological role, catalyzes the decarboxylation of four acetate groups of uroporphyrinogen-III to yield coproporphyrinogen-III. This chain is Uroporphyrinogen decarboxylase, found in Corynebacterium efficiens (strain DSM 44549 / YS-314 / AJ 12310 / JCM 11189 / NBRC 100395).